The primary structure comprises 640 residues: Scarecrow-like protein 27 (640 aa).

2 stretches are compositionally biased toward low complexity: residues 68–79 and 86–98; these read SYSSTTTTLSSS and TVTN…GDDN. Residues 68–98 are disordered; the sequence is SYSSTTTTLSSSHGGGGTTVTNTTVTAGDDN. The GRAS domain maps to 259–639; sequence GMAGDDQSVI…KELVTVSAWK (381 aa). A leucine repeat I (LRI) region spans residues 266-331; the sequence is SVIIEQLFNA…AEALLSLIHN (66 aa). The segment at 350 to 422 is VHIID; the sequence is YRSFSETSPF…NRASSLKLTV (73 aa). Residues 383–387 carry the VHIID motif; sequence IHIID. The tract at residues 438-470 is leucine repeat II (LRII); the sequence is FTEENLKTFAGEVKIPFEIELLSVELLLNPAYW. A PFYRE region spans residues 480–565; that stretch reads EAIAVNLPVN…RFWVQPSIEK (86 aa). The interval 568–639 is SAW; sequence MKRHRWIERS…KELVTVSAWK (72 aa).

This sequence belongs to the GRAS family. As to expression, expressed in seedlings, roots, cotyledons, leaves and flowers.

It is found in the nucleus. In terms of biological role, probable transcription factor involved in plant development. The chain is Scarecrow-like protein 27 (SCL27) from Arabidopsis thaliana (Mouse-ear cress).